The primary structure comprises 510 residues: Pre-glycoprotein polyprotein GP complex (510 aa).

Glycine 2 is lipidated: N-myristoyl glycine; by host. The Extracellular segment spans residues 2-17; sequence GQFITLMQSIPEALNM. Residues 18-32 traverse the membrane as a helical segment; that stretch reads AFNVALVIVSLLCVT. A topological domain (cytoplasmic) is located at residue lysine 33. Residues 34-53 traverse the membrane as a helical segment; the sequence is GLINLWKCGIIQLLMFLALA. Extracellular segments follow at residues 54-58 and 59-448; these read GRSCD and GEYK…ALAD. Cysteine 57 contributes to the Zn(2+) binding site. N-linked (GlcNAc...) asparagine; by host glycosylation is found at asparagine 75, asparagine 90, asparagine 101, asparagine 112, asparagine 117, asparagine 122, asparagine 133, asparagine 182, asparagine 218, and asparagine 243. Intrachain disulfides connect cysteine 87–cysteine 250, cysteine 295–cysteine 308, cysteine 317–cysteine 326, and cysteine 380–cysteine 401. Residues asparagine 381, asparagine 389, asparagine 406, and asparagine 411 are each glycosylated (N-linked (GlcNAc...) asparagine; by host). A helical transmembrane segment spans residues 449-469; it reads LCFWSLVFFTTTVFFQLIGIP. Residues 470-510 are Cytoplasmic-facing; it reads THRHLIGEGCPKPHRLTSNSLCSCGFYKIPKKPFRWVRKGK. Zn(2+) contacts are provided by histidine 471, histidine 473, cysteine 479, histidine 483, cysteine 491, and cysteine 493.

Belongs to the arenaviridae GPC protein family. Homotetramer; disulfide-linked. As to quaternary structure, homotetramer. GP2 homotetramers bind through ionic interactions with GP1 homotetramers to form the GP complex together with the stable signal peptide. The GP-C polyprotein interacts with the host protease MBTPS1/SKI-1 resulting in the polyprotein processing. Post-translationally, specific enzymatic cleavages in vivo yield mature proteins. GP-C polyprotein is cleaved in the endoplasmic reticulum by the host protease MBTPS1. Only cleaved glycoprotein is incorporated into virions. The SSP remains stably associated with the GP complex following cleavage by signal peptidase and plays crucial roles in the trafficking of GP through the secretory pathway. In terms of processing, myristoylation is necessary for GP2-mediated fusion activity.

The protein resides in the virion membrane. It is found in the host endoplasmic reticulum membrane. The protein localises to the host Golgi apparatus membrane. It localises to the host cell membrane. Its function is as follows. Class I viral fusion protein that directs fusion of viral and host endosomal membranes, leading to delivery of the nucleocapsid into the cytoplasm. Membrane fusion is mediated by irreversible conformational changes induced upon acidification in the endosome. In terms of biological role, stable signal peptide (SSP): cleaved and functions as a signal peptide. In addition, it is also retained as the third component of the GP complex. The SSP is required for efficient glycoprotein expression, post-translational maturation cleavage of GP1 and GP2, glycoprotein transport to the cell surface plasma membrane, formation of infectious virus particles, and acid pH-dependent glycoprotein-mediated cell fusion. Functionally, interacts with the host receptor. This Pirital mammarenavirus (isolate Rat/Venezuela/VAV-488/1995) (PIRV) protein is Pre-glycoprotein polyprotein GP complex.